Here is a 507-residue protein sequence, read N- to C-terminus: Hippocampus abundant transcript-like protein 1 (507 aa).

The tract at residues 1–27 (MSTDGESPEEPRWKAVASPKASTMPEK) is disordered. At 1-51 (MSTDGESPEEPRWKAVASPKASTMPEKRGSAQAASGSWLQGFGHPSVYHAA) the chain is on the extracellular side. The chain crosses the membrane as a helical span at residues 52–72 (FVIFLEFFAWGLLTTPMLTVL). Residues 73 to 84 (HETFPQHTFLMN) lie on the Cytoplasmic side of the membrane. Residues 85 to 105 (GLIQGVKGLLSFLSAPLIGAL) traverse the membrane as a helical segment. Residues 106–113 (SDVWGRKP) lie on the Extracellular side of the membrane. The chain crosses the membrane as a helical span at residues 114–134 (FLLGTVFFTCFPIPLMRINPW). Residues 135–136 (WY) lie on the Cytoplasmic side of the membrane. A helical membrane pass occupies residues 137–157 (FGMISVSGVFSVTFSVIFAYV). At 158–170 (ADFTQEHERSTAY) the chain is on the extracellular side. Residues 171–191 (GWVSATFAASLVSSPAIGTYL) form a helical membrane-spanning segment. At 192–198 (SANYGDS) the chain is on the cytoplasmic side. Residues 199 to 219 (LVVLVATLVALLDICFILIAV) form a helical membrane-spanning segment. At 220–257 (PESLSEKIRPASWGAQISWKQADPFASLKKVGKDSTVL) the chain is on the extracellular side. The helical transmembrane segment at 258–278 (LICITVFLSYLPEAGQYSSFF) threads the bilayer. The Cytoplasmic portion of the chain corresponds to 279–283 (LYLRQ). The chain crosses the membrane as a helical span at residues 284–304 (VIGFGSVKIVAFIAMVGILSI). Residues 305 to 323 (VAQTVFLSKLMRSLGNKNT) lie on the Extracellular side of the membrane. A helical transmembrane segment spans residues 324-344 (VLLGLGFQMLQLAWYGFGSQA). Residues 345 to 347 (WMM) lie on the Cytoplasmic side of the membrane. The chain crosses the membrane as a helical span at residues 348–368 (WAAGTVAAMSSITFPAVSALI). Over 369-389 (SRNAESDQQGVAQGIVTGIRG) the chain is Extracellular. Residues 390–410 (LCNGLGPALYGFIFYMFHVEL) traverse the membrane as a helical segment. The Cytoplasmic portion of the chain corresponds to 411–430 (SELGPKLNSDDDPLQGAFIP). Residues 431 to 451 (GPPFLFGACIVLMSFLVALFI) traverse the membrane as a helical segment. At 452–507 (PEYRKTSGVQKHNNSTSGSLSTPPERGSDEDIEPLLQDSSIWELSFEEPGNQCTEL) the chain is on the extracellular side. Residues 459-473 (GVQKHNNSTSGSLST) show a composition bias toward polar residues. Residues 459–483 (GVQKHNNSTSGSLSTPPERGSDEDI) form a disordered region. N-linked (GlcNAc...) asparagine glycans are attached at residues N464 and N465.

This sequence belongs to the major facilitator superfamily.

It is found in the membrane. This is Hippocampus abundant transcript-like protein 1 from Mus musculus (Mouse).